Here is a 448-residue protein sequence, read N- to C-terminus: Glutamate--tRNA ligase 2 (448 aa).

The 'HIGH' region motif lies at 9–19; the sequence is PSPTGKLHIGN. The 'KMSKS' region motif lies at 240 to 244; it reads KISKR. Lysine 243 contacts ATP.

This sequence belongs to the class-I aminoacyl-tRNA synthetase family. Glutamate--tRNA ligase type 1 subfamily. Monomer.

Its subcellular location is the cytoplasm. It carries out the reaction tRNA(Glu) + L-glutamate + ATP = L-glutamyl-tRNA(Glu) + AMP + diphosphate. In terms of biological role, catalyzes the attachment of glutamate to tRNA(Glu) in a two-step reaction: glutamate is first activated by ATP to form Glu-AMP and then transferred to the acceptor end of tRNA(Glu). In Orientia tsutsugamushi (strain Boryong) (Rickettsia tsutsugamushi), this protein is Glutamate--tRNA ligase 2.